The following is a 302-amino-acid chain: Transcription factor bHLH7 (302 aa).

The interval 124–154 (QPMSQPAPPMPHQQSTIRPRVRARRGQATDP) is disordered. One can recognise a bHLH domain in the interval 150-199 (QATDPHSIAERLRRERIAERIRSLQELVPTVNKTDRAAMIDEIVDYVKFL).

In terms of assembly, homodimer. As to expression, expressed constitutively in roots, leaves, stems and flowers.

The protein localises to the nucleus. This Arabidopsis thaliana (Mouse-ear cress) protein is Transcription factor bHLH7 (BHLH7).